Consider the following 76-residue polypeptide: Lividin-2 (76 aa).

The first 22 residues, Met1–Cys22, serve as a signal peptide directing secretion. Positions Gln23–Val41 are excised as a propeptide. Residues Cys70 and Cys76 are joined by a disulfide bond.

As to expression, expressed by the skin glands.

The protein resides in the secreted. In terms of biological role, antimicrobial peptide. This Odorrana livida (Green mountain frog) protein is Lividin-2.